Consider the following 289-residue polypeptide: MAGAKEVKTKIKSVQNTQKITSAMEMVAASKMRRAQERMEATRPYAEKIRQVIGHLGHANPDYRHPFLVERDEVKRVGYIVVSTDRGLCGGLNVNLFKAAINDLKGWQEQGVGAQVVPIGAKGIGFFERTGVEIPAEVRDIGDRPKLEQMIGPIKVLLDAYVDGTIDRVNLVSNQFVNTMTQRPQVQRLIPVEPVREEEMLENWDYIYEPDAASLLDDVLRRYVESQVYQGVVENIACEMAARMIAMKSASDNAAEIIDDLQITYNKARQAAITQELTEIVSGAEAVSG.

It belongs to the ATPase gamma chain family. F-type ATPases have 2 components, CF(1) - the catalytic core - and CF(0) - the membrane proton channel. CF(1) has five subunits: alpha(3), beta(3), gamma(1), delta(1), epsilon(1). CF(0) has three main subunits: a, b and c.

Its subcellular location is the cell inner membrane. Produces ATP from ADP in the presence of a proton gradient across the membrane. The gamma chain is believed to be important in regulating ATPase activity and the flow of protons through the CF(0) complex. This chain is ATP synthase gamma chain, found in Halorhodospira halophila (strain DSM 244 / SL1) (Ectothiorhodospira halophila (strain DSM 244 / SL1)).